Reading from the N-terminus, the 334-residue chain is Holliday junction branch migration complex subunit RuvB (334 aa).

Residues 4 to 186 (ADRLIAPENP…FGITQRLEYY (183 aa)) are large ATPase domain (RuvB-L). Residues Ile-25, Arg-26, Gly-67, Lys-70, Thr-71, Thr-72, 133–135 (EDY), Arg-176, Tyr-186, and Arg-223 contribute to the ATP site. Position 71 (Thr-71) interacts with Mg(2+). The tract at residues 187–257 (KIPDLQNIVQ…TADKALNMLD (71 aa)) is small ATPAse domain (RuvB-S). Residues 260–334 (SKGFDYMDRK…RAYLHFGIEK (75 aa)) are head domain (RuvB-H). DNA-binding residues include Arg-315 and Arg-320.

The protein belongs to the RuvB family. In terms of assembly, homohexamer. Forms an RuvA(8)-RuvB(12)-Holliday junction (HJ) complex. HJ DNA is sandwiched between 2 RuvA tetramers; dsDNA enters through RuvA and exits via RuvB. An RuvB hexamer assembles on each DNA strand where it exits the tetramer. Each RuvB hexamer is contacted by two RuvA subunits (via domain III) on 2 adjacent RuvB subunits; this complex drives branch migration. In the full resolvosome a probable DNA-RuvA(4)-RuvB(12)-RuvC(2) complex forms which resolves the HJ.

It localises to the cytoplasm. It carries out the reaction ATP + H2O = ADP + phosphate + H(+). The RuvA-RuvB-RuvC complex processes Holliday junction (HJ) DNA during genetic recombination and DNA repair, while the RuvA-RuvB complex plays an important role in the rescue of blocked DNA replication forks via replication fork reversal (RFR). RuvA specifically binds to HJ cruciform DNA, conferring on it an open structure. The RuvB hexamer acts as an ATP-dependent pump, pulling dsDNA into and through the RuvAB complex. RuvB forms 2 homohexamers on either side of HJ DNA bound by 1 or 2 RuvA tetramers; 4 subunits per hexamer contact DNA at a time. Coordinated motions by a converter formed by DNA-disengaged RuvB subunits stimulates ATP hydrolysis and nucleotide exchange. Immobilization of the converter enables RuvB to convert the ATP-contained energy into a lever motion, pulling 2 nucleotides of DNA out of the RuvA tetramer per ATP hydrolyzed, thus driving DNA branch migration. The RuvB motors rotate together with the DNA substrate, which together with the progressing nucleotide cycle form the mechanistic basis for DNA recombination by continuous HJ branch migration. Branch migration allows RuvC to scan DNA until it finds its consensus sequence, where it cleaves and resolves cruciform DNA. The protein is Holliday junction branch migration complex subunit RuvB of Vibrio vulnificus (strain YJ016).